Here is an 87-residue protein sequence, read N- to C-terminus: HssA/B-like protein 28 (87 aa).

This sequence belongs to the hssA/B family.

In Dictyostelium discoideum (Social amoeba), this protein is HssA/B-like protein 28 (hssl28).